Consider the following 76-residue polypeptide: MEELILSIVKPLVDHPEDVVITPEETDTSLTYKLSVSKEDMGRVIGKQGRIAKAIRTLVYAVGSKNDKKIRLEIIE.

The 48-residue stretch at 29–76 (SLTYKLSVSKEDMGRVIGKQGRIAKAIRTLVYAVGSKNDKKIRLEIIE) folds into the KH domain.

It belongs to the KhpA RNA-binding protein family. As to quaternary structure, forms a complex with KhpB.

It localises to the cytoplasm. In terms of biological role, a probable RNA chaperone. Forms a complex with KhpB which binds to cellular RNA and controls its expression. Plays a role in peptidoglycan (PG) homeostasis and cell length regulation. The chain is RNA-binding protein KhpA from Listeria innocua serovar 6a (strain ATCC BAA-680 / CLIP 11262).